A 181-amino-acid chain; its full sequence is UPF0302 protein lin2035 (181 aa).

It belongs to the UPF0302 family.

In Listeria innocua serovar 6a (strain ATCC BAA-680 / CLIP 11262), this protein is UPF0302 protein lin2035.